A 350-amino-acid polypeptide reads, in one-letter code: GDSL esterase/lipase At4g10955 (350 aa).

Belongs to the 'GDSL' lipolytic enzyme family.

The protein is GDSL esterase/lipase At4g10955 of Arabidopsis thaliana (Mouse-ear cress).